A 1031-amino-acid chain; its full sequence is Semaphorin-6A (1031 aa).

A signal peptide spans 1–18 (MRPAALLLCLTLLHCAGA). Residues 19–649 (GFPEDSEPIS…KSNDQLVPVT (631 aa)) are Extracellular-facing. The Sema domain maps to 24–512 (SEPISISHGN…FSTCVIKVPL (489 aa)). Asn-33, Asn-49, and Asn-65 each carry an N-linked (GlcNAc...) asparagine glycan. Disulfide bonds link Cys-107–Cys-117, Cys-135–Cys-144, Cys-258–Cys-369, and Cys-283–Cys-328. Residue Asn-282 is glycosylated (N-linked (GlcNAc...) asparagine). Asn-434 and Asn-461 each carry an N-linked (GlcNAc...) asparagine glycan. 4 disulfide bridges follow: Cys-477-Cys-506, Cys-515-Cys-533, Cys-521-Cys-568, and Cys-525-Cys-542. A helical transmembrane segment spans residues 650-670 (LLAIAVILAFVMGAVFSGIIV). The Cytoplasmic portion of the chain corresponds to 671-1031 (YCVCDHRRKD…TSMKPNDACT (361 aa)). Residue Ser-698 is modified to Phosphoserine. Disordered regions lie at residues 754 to 777 (ALPT…SREW), 861 to 902 (SSKS…TGLS), and 914 to 1031 (GLEY…DACT). Residues 921–931 (YPTNSLTRSHQ) show a composition bias toward polar residues. Low complexity predominate over residues 932-951 (TTTLKRNNTNSSNSSHLSRN). Ser-953 bears the Phosphoserine mark. Polar residues-rich tracts occupy residues 971 to 998 (QVHS…SLTR) and 1019 to 1031 (PLST…DACT).

This sequence belongs to the semaphorin family. Active as a homodimer or oligomer. The SEMA6A homodimer interacts with a PLXNA2 homodimer, giving rise to a heterotetramer. Interacts with EVL. As to expression, particularly high levels in spinal cord, cerebellum, metencephalon, superior and inferior colliculus, diencephalon, olfactory bulb and eye.

It is found in the cell membrane. Functionally, cell surface receptor for PLXNA2 that plays an important role in cell-cell signaling. Required for normal granule cell migration in the developing cerebellum. Promotes reorganization of the actin cytoskeleton and plays an important role in axon guidance in the developing central nervous system. Can act as repulsive axon guidance cue. Has repulsive action towards migrating granular neurons. May play a role in channeling sympathetic axons into the sympathetic chains and controlling the temporal sequence of sympathetic target innervation. In Mus musculus (Mouse), this protein is Semaphorin-6A (Sema6a).